Reading from the N-terminus, the 326-residue chain is ELAV-like protein 1 (326 aa).

3 RRM domains span residues 20–98 (TNLI…VARP), 106–186 (ANLY…FAAN), and 244–322 (WCIF…FKTS).

Belongs to the RRM elav family. As to quaternary structure, interacts (via RRM3) with cirbp. Unable to form oligomers. Part of a ribonucleoprotein (RNP) complex, at least composed of elavl1/elrA and/or elavl2/elrB, igf2bp3/vg1RBP, ddx6/Xp54, ybx2/frgy2, lsm14b/rap55b and, in a subset of RNP complexes, stau1/staufen.

It is found in the cytoplasm. The protein resides in the cell cortex. Its function is as follows. RNA-binding protein that binds to the 3'-UTR region of mRNAs and increases their stability. Involved in embryonic stem cells (ESCs) differentiation: preferentially binds mRNAs that are not methylated by N6-methyladenosine (m6A), stabilizing them, promoting ESCs differentiation. Binds to poly-U elements and AU-rich elements (AREs) in the 3'-UTR of target mRNAs. Acts cooperatively with cribp to stabilize AU-rich sequence (ARE)-containing mRNAs. May play a role during gastrulation. Required for the vegetal localization of vg1 mRNA. This is ELAV-like protein 1 from Xenopus tropicalis (Western clawed frog).